Consider the following 220-residue polypeptide: MSHFKIVFLTSLSLALVFELFNTISVPITSHLFISEYNGYKFGVFGWCKVDGSICSPIRMGYSLDDILLFNDNEYLHLPNHAKYALSKLLLVHVLSFVCVLVFWLFAILICIKWLNTSKSVLLFAVGWSMVTFMVSLLGFLIDVLMFASHVTWSSWLMLVSAFFVALSGILLCLMIRDLSYRRFVKLQGEVDVCVPMTEPRDPDELNEIWKKKTSKREIL.

Topologically, residues 1–5 are cytoplasmic; that stretch reads MSHFK. Residues 6–26 form a helical membrane-spanning segment; sequence IVFLTSLSLALVFELFNTISV. Topologically, residues 27-89 are extracellular; that stretch reads PITSHLFISE…NHAKYALSKL (63 aa). The helical transmembrane segment at 90-110 threads the bilayer; sequence LLVHVLSFVCVLVFWLFAILI. At 111–121 the chain is on the cytoplasmic side; it reads CIKWLNTSKSV. A helical transmembrane segment spans residues 122–142; it reads LLFAVGWSMVTFMVSLLGFLI. Topologically, residues 143-155 are extracellular; the sequence is DVLMFASHVTWSS. Residues 156–176 traverse the membrane as a helical segment; that stretch reads WLMLVSAFFVALSGILLCLMI. Residues 177-220 are Cytoplasmic-facing; sequence RDLSYRRFVKLQGEVDVCVPMTEPRDPDELNEIWKKKTSKREIL.

This sequence belongs to the palI/RIM9 family.

It is found in the cell membrane. In terms of biological role, required for the proteolytic cleavage of the transcription factor RIM101 in response to alkaline ambient pH. The protein is pH-response regulator palI/RIM9 homolog 1 of Kluyveromyces lactis (strain ATCC 8585 / CBS 2359 / DSM 70799 / NBRC 1267 / NRRL Y-1140 / WM37) (Yeast).